The chain runs to 1146 residues: Reverse gyrase 1 (1146 aa).

The segment at 1-38 (MIKAIFDTLCPNCGGEISAERLLKGLPCEKCLPEEVNR) adopts an RG N-terminal-type zinc-finger fold. 4 residues coordinate Zn(2+): C10, C13, C28, and C31. ATP-binding positions include Q79 and 96-103 (APTGVGKT). The 158-residue stretch at 83–240 (ARKVFLGRSF…RLKEKPNKSE (158 aa)) folds into the Helicase ATP-binding domain. The DEAD box signature appears at 197–200 (DDVD). One can recognise a Helicase C-terminal domain in the interval 412–565 (HLLWALLSLR…FKKIEEVDLK (154 aa)). Residues 592 to 1146 (EHVKPVLVVV…KVNEFEKANV (555 aa)) are topoisomerase I. The Toprim domain occupies 596–728 (PVLVVVESPN…NVERIEFHEV (133 aa)). Mg(2+) is bound by residues E602 and D697. The Topo IA-type catalytic domain maps to 744–1142 (NENLVKAQLV…ELYKKVNEFE (399 aa)). Y891 acts as the O-(5'-phospho-DNA)-tyrosine intermediate in catalysis.

This sequence in the N-terminal section; belongs to the DEAD box helicase family. DDVD subfamily. In the C-terminal section; belongs to the type IA topoisomerase family. Monomer. It depends on Zn(2+) as a cofactor. Mg(2+) is required as a cofactor.

The protein resides in the cytoplasm. The catalysed reaction is ATP + H2O = ADP + phosphate + H(+). Modifies the topological state of DNA by introducing positive supercoils in an ATP-dependent process, increasing the linking number in steps of +1. Binds to single-stranded DNA, transiently cleaves and then rejoins the ends, introducing a positive supercoil in the process. The scissile phosphodiester is attacked by the catalytic tyrosine of the enzyme, resulting in the formation of a DNA-(5'-phosphotyrosyl)-enzyme intermediate. Probably involved in rewinding DNA strands in regions of the chromosome that have opened up to allow replication, transcription, DNA repair and/or for DNA protection. This chain is Reverse gyrase 1, found in Aquifex aeolicus (strain VF5).